The sequence spans 202 residues: Thymidylate kinase (202 aa).

An ATP-binding site is contributed by 7 to 14 (GIDGSGKT).

It belongs to the thymidylate kinase family.

The catalysed reaction is dTMP + ATP = dTDP + ADP. Its function is as follows. Phosphorylation of dTMP to form dTDP in both de novo and salvage pathways of dTTP synthesis. The chain is Thymidylate kinase from Ehrlichia canis (strain Jake).